We begin with the raw amino-acid sequence, 296 residues long: 4-hydroxy-tetrahydrodipicolinate synthase (296 aa).

Residue Thr49 coordinates pyruvate. Tyr137 acts as the Proton donor/acceptor in catalysis. The active-site Schiff-base intermediate with substrate is Lys165. Ile207 is a binding site for pyruvate.

Belongs to the DapA family. As to quaternary structure, homotetramer; dimer of dimers.

Its subcellular location is the cytoplasm. The catalysed reaction is L-aspartate 4-semialdehyde + pyruvate = (2S,4S)-4-hydroxy-2,3,4,5-tetrahydrodipicolinate + H2O + H(+). The protein operates within amino-acid biosynthesis; L-lysine biosynthesis via DAP pathway; (S)-tetrahydrodipicolinate from L-aspartate: step 3/4. Functionally, catalyzes the condensation of (S)-aspartate-beta-semialdehyde [(S)-ASA] and pyruvate to 4-hydroxy-tetrahydrodipicolinate (HTPA). This Bradyrhizobium diazoefficiens (strain JCM 10833 / BCRC 13528 / IAM 13628 / NBRC 14792 / USDA 110) protein is 4-hydroxy-tetrahydrodipicolinate synthase.